The primary structure comprises 60 residues: SLWQFGKMINYVMGESGVLQYLSYGCYCGLGGQGQPTDATDRCCFVHDCCYGKVTGCDPK.

The Ca(2+) site is built by Tyr27, Gly29, and Gly31. Cys28 and Cys44 are oxidised to a cystine. The active site involves His47. A Ca(2+)-binding site is contributed by Asp48.

Belongs to the phospholipase A2 family. Group II subfamily. D49 sub-subfamily. Monomer. Requires Ca(2+) as cofactor. As to expression, expressed by the venom gland.

The protein localises to the secreted. It carries out the reaction a 1,2-diacyl-sn-glycero-3-phosphocholine + H2O = a 1-acyl-sn-glycero-3-phosphocholine + a fatty acid + H(+). In terms of biological role, snake venom phospholipase A2 (PLA2) that exhibits an indirect hemolytic activity, a low myotoxicity, and induces edema. In addition, this enzyme has been shown to induce the release of some pro- and anti-inflammatory cytokines from human PBMC (IL12B, TNF-alpha, IL1B and IL6 but not variation has been observed for IL-8 and IL-10). PLA2 catalyzes the calcium-dependent hydrolysis of the 2-acyl groups in 3-sn-phosphoglycerides. The chain is Acidic phospholipase A2 from Bothrops leucurus (Whitetail lancehead).